The primary structure comprises 176 residues: Gamma-crystallin M2 (176 aa).

2 consecutive Beta/gamma crystallin 'Greek key' domains span residues 2-40 and 41-83; these read GKVI…RVEG and GCWV…RIIP. The connecting peptide stretch occupies residues 84-88; it reads QYRGS. 2 consecutive Beta/gamma crystallin 'Greek key' domains span residues 89-129 and 130-172; these read YRMR…HVMD and GYWI…RRIM.

This sequence belongs to the beta/gamma-crystallin family. Monomer.

Its function is as follows. Crystallins are the dominant structural components of the vertebrate eye lens. This Chiloscyllium indicum (Slender bamboo shark) protein is Gamma-crystallin M2 (GM2).